The following is a 459-amino-acid chain: DIMBOA UDP-glucosyltransferase BX8 (459 aa).

Catalysis depends on H19, which acts as the Proton acceptor. An an anthocyanidin-binding site is contributed by H19. D119 functions as the Charge relay in the catalytic mechanism. Residues T141, A340, Q342, H357, W360, N361, S362, and E365 each coordinate UDP-alpha-D-glucose. G380 contributes to the an anthocyanidin binding site. UDP-alpha-D-glucose is bound by residues D381 and Q382.

Belongs to the UDP-glycosyltransferase family. The cofactor is Mg(2+). It depends on Ca(2+) as a cofactor. Expressed at the same levels in roots and shoots.

It catalyses the reaction DIMBOA + UDP-alpha-D-glucose = DIMBOA beta-D-glucoside + UDP + H(+). The catalysed reaction is DIBOA + UDP-alpha-D-glucose = DIBOA beta-D-glucoside + UDP + H(+). In terms of biological role, glucosyltransferase involved in the last step of benzoxazinoid glucoside biosynthesis. Catalyzes the glucosylation of hydroxamic acids utilizing UDP-glucose as glucose doner, reducing the toxicity of these natural insecticides for storage. Can use DIMBOA and DIBOA as substrates, HMBOA (2-hydroxy-7-methoxy-2H-1,4-benzoxazin-3(4H)-one) and HBOA (2-hydroxy-2H-1,4-benzoxazin-3(4H)-one) with a lower efficiency, but not indole acetic acid or quercitin. This is DIMBOA UDP-glucosyltransferase BX8 (Bx8) from Zea mays (Maize).